The following is a 303-amino-acid chain: Phospholipase A1 2 (303 aa).

A disulfide bond links Cys-6 and Cys-90. Ser-140 (nucleophile) is an active-site residue. Catalysis depends on Asp-168, which acts as the Charge relay system. Cys-179 and Cys-184 form a disulfide bridge. His-232 functions as the Charge relay system in the catalytic mechanism. 3 cysteine pairs are disulfide-bonded: Cys-247-Cys-271, Cys-248-Cys-296, and Cys-264-Cys-269.

It belongs to the AB hydrolase superfamily. Lipase family. Expressed by the venom gland.

It localises to the secreted. The catalysed reaction is a 1,2-diacyl-sn-glycero-3-phosphocholine + H2O = a 2-acyl-sn-glycero-3-phosphocholine + a fatty acid + H(+). Catalyzes the hydrolysis of phosphatidylcholine with phospholipase A1 activity. May act as an allergen and induce hemolytic activity. In Dolichovespula maculata (Bald-faced hornet), this protein is Phospholipase A1 2.